Consider the following 70-residue polypeptide: KKNGYAVDSSGKAPECLLSNYCYNECTKVHYADKGYCCLLSCYCVGLSDDKKVLEISDARKKYCDFVTIN.

In terms of domain architecture, LCN-type CS-alpha/beta spans 2 to 65 (KNGYAVDSSG…ISDARKKYCD (64 aa)). 4 cysteine pairs are disulfide-bonded: C16-C37, C22-C42, C26-C44, and C38-C64.

It belongs to the long (4 C-C) scorpion toxin superfamily. Sodium channel inhibitor family. Beta subfamily. Expressed by the venom gland.

The protein localises to the secreted. In terms of biological role, excitatory insect beta-toxins induce a spastic paralysis. They bind voltage-independently at site-4 of sodium channels (Nav) and shift the voltage of activation toward more negative potentials thereby affecting sodium channel activation and promoting spontaneous and repetitive firing. In vivo, this toxin induces a fast excitatory contraction paralysis on fly larvae. It is active only on insects. The chain is Beta-insect excitatory toxin LqqIT1 from Leiurus quinquestriatus quinquestriatus (Egyptian scorpion).